A 1234-amino-acid polypeptide reads, in one-letter code: DNA-directed RNA polymerase subunit beta (1234 aa).

Positions 1169 to 1234 (ESVDEDADEL…LDLDDFGDEH (66 aa)) are disordered. 2 stretches are compositionally biased toward acidic residues: residues 1171 to 1180 (VDEDADELEV) and 1191 to 1234 (EKEE…GDEH).

This sequence belongs to the RNA polymerase beta chain family. In terms of assembly, the RNAP catalytic core consists of 2 alpha, 1 beta, 1 beta' and 1 omega subunit. When a sigma factor is associated with the core the holoenzyme is formed, which can initiate transcription.

It carries out the reaction RNA(n) + a ribonucleoside 5'-triphosphate = RNA(n+1) + diphosphate. Its function is as follows. DNA-dependent RNA polymerase catalyzes the transcription of DNA into RNA using the four ribonucleoside triphosphates as substrates. This is DNA-directed RNA polymerase subunit beta from Clostridium botulinum (strain Langeland / NCTC 10281 / Type F).